Here is a 224-residue protein sequence, read N- to C-terminus: UPF0758 protein Sde_3678 (224 aa).

The MPN domain occupies Ser102–Ile224. Residues His173, His175, and Asp186 each coordinate Zn(2+). Residues His173–Asp186 carry the JAMM motif motif.

It belongs to the UPF0758 family.

This is UPF0758 protein Sde_3678 from Saccharophagus degradans (strain 2-40 / ATCC 43961 / DSM 17024).